A 158-amino-acid chain; its full sequence is Acireductone dioxygenase (158 aa).

H81, H83, E87, and H126 together coordinate Fe(2+). Residues H81, H83, E87, and H126 each contribute to the Ni(2+) site.

Belongs to the acireductone dioxygenase (ARD) family. It depends on Fe(2+) as a cofactor. Ni(2+) serves as cofactor.

The protein resides in the cytoplasm. Its subcellular location is the nucleus. The catalysed reaction is 1,2-dihydroxy-5-(methylsulfanyl)pent-1-en-3-one + O2 = 4-methylsulfanyl-2-oxobutanoate + formate + 2 H(+). It catalyses the reaction 1,2-dihydroxy-5-(methylsulfanyl)pent-1-en-3-one + O2 = 3-(methylsulfanyl)propanoate + CO + formate + 2 H(+). The protein operates within amino-acid biosynthesis; L-methionine biosynthesis via salvage pathway; L-methionine from S-methyl-5-thio-alpha-D-ribose 1-phosphate: step 5/6. In terms of biological role, catalyzes 2 different reactions between oxygen and the acireductone 1,2-dihydroxy-3-keto-5-methylthiopentene (DHK-MTPene) depending upon the metal bound in the active site. Fe-containing acireductone dioxygenase (Fe-ARD) produces formate and 2-keto-4-methylthiobutyrate (KMTB), the alpha-ketoacid precursor of methionine in the methionine recycle pathway. Ni-containing acireductone dioxygenase (Ni-ARD) produces methylthiopropionate, carbon monoxide and formate, and does not lie on the methionine recycle pathway. This chain is Acireductone dioxygenase, found in Metarhizium robertsii (strain ARSEF 23 / ATCC MYA-3075) (Metarhizium anisopliae (strain ARSEF 23)).